Consider the following 103-residue polypeptide: Co-chaperonin GroES (103 aa).

Positions 31-67 are disordered; it reads GGILLPDTAKEKPQVGEVAQVGPGKRNEDGSRQSPEV.

It belongs to the GroES chaperonin family. Heptamer of 7 subunits arranged in a ring. Interacts with the chaperonin GroEL.

Its subcellular location is the cytoplasm. Together with the chaperonin GroEL, plays an essential role in assisting protein folding. The GroEL-GroES system forms a nano-cage that allows encapsulation of the non-native substrate proteins and provides a physical environment optimized to promote and accelerate protein folding. GroES binds to the apical surface of the GroEL ring, thereby capping the opening of the GroEL channel. This Prochlorococcus marinus (strain NATL2A) protein is Co-chaperonin GroES.